The primary structure comprises 239 residues: Glandular kallikrein, prostatic (239 aa).

Positions 1–236 (VIGGQECARD…YREWIERTMA (236 aa)) constitute a Peptidase S1 domain. 5 cysteine pairs are disulfide-bonded: Cys7-Cys151, Cys26-Cys42, Cys128-Cys197, Cys162-Cys176, and Cys187-Cys212. The active-site Charge relay system is the His41. Asn78 carries N-linked (GlcNAc...) asparagine glycosylation. Asp96 (charge relay system) is an active-site residue. N-linked (GlcNAc...) asparagine glycosylation is present at Asn169. The active-site Charge relay system is Ser191.

The protein belongs to the peptidase S1 family. Kallikrein subfamily.

The enzyme catalyses Preferential cleavage of Arg-|-Xaa bonds in small molecule substrates. Highly selective action to release kallidin (lysyl-bradykinin) from kininogen involves hydrolysis of Met-|-Xaa or Leu-|-Xaa.. Functionally, glandular kallikreins cleave Met-Lys and Arg-Ser bonds in kininogen to release Lys-bradykinin. The sequence is that of Glandular kallikrein, prostatic from Cavia porcellus (Guinea pig).